The primary structure comprises 572 residues: Proline--tRNA ligase (572 aa).

This sequence belongs to the class-II aminoacyl-tRNA synthetase family. ProS type 1 subfamily. As to quaternary structure, homodimer.

It localises to the cytoplasm. The enzyme catalyses tRNA(Pro) + L-proline + ATP = L-prolyl-tRNA(Pro) + AMP + diphosphate. Its function is as follows. Catalyzes the attachment of proline to tRNA(Pro) in a two-step reaction: proline is first activated by ATP to form Pro-AMP and then transferred to the acceptor end of tRNA(Pro). As ProRS can inadvertently accommodate and process non-cognate amino acids such as alanine and cysteine, to avoid such errors it has two additional distinct editing activities against alanine. One activity is designated as 'pretransfer' editing and involves the tRNA(Pro)-independent hydrolysis of activated Ala-AMP. The other activity is designated 'posttransfer' editing and involves deacylation of mischarged Ala-tRNA(Pro). The misacylated Cys-tRNA(Pro) is not edited by ProRS. The chain is Proline--tRNA ligase from Escherichia coli O7:K1 (strain IAI39 / ExPEC).